Reading from the N-terminus, the 410-residue chain is Peptidase T (410 aa).

His-79 provides a ligand contact to Zn(2+). Asp-81 is a catalytic residue. Asp-142 contributes to the Zn(2+) binding site. Residue Glu-176 is the Proton acceptor of the active site. Zn(2+)-binding residues include Glu-177, Asp-199, and His-381.

It belongs to the peptidase M20B family. Zn(2+) is required as a cofactor.

The protein resides in the cytoplasm. The enzyme catalyses Release of the N-terminal residue from a tripeptide.. Its function is as follows. Cleaves the N-terminal amino acid of tripeptides. This Listeria welshimeri serovar 6b (strain ATCC 35897 / DSM 20650 / CCUG 15529 / CIP 8149 / NCTC 11857 / SLCC 5334 / V8) protein is Peptidase T.